Consider the following 154-residue polypeptide: NAD(P)H-quinone oxidoreductase subunit N (154 aa).

It belongs to the complex I NdhN subunit family. As to quaternary structure, NDH-1 can be composed of about 15 different subunits; different subcomplexes with different compositions have been identified which probably have different functions.

The protein resides in the cellular thylakoid membrane. The enzyme catalyses a plastoquinone + NADH + (n+1) H(+)(in) = a plastoquinol + NAD(+) + n H(+)(out). It carries out the reaction a plastoquinone + NADPH + (n+1) H(+)(in) = a plastoquinol + NADP(+) + n H(+)(out). NDH-1 shuttles electrons from an unknown electron donor, via FMN and iron-sulfur (Fe-S) centers, to quinones in the respiratory and/or the photosynthetic chain. The immediate electron acceptor for the enzyme in this species is believed to be plastoquinone. Couples the redox reaction to proton translocation, and thus conserves the redox energy in a proton gradient. Cyanobacterial NDH-1 also plays a role in inorganic carbon-concentration. This is NAD(P)H-quinone oxidoreductase subunit N from Prochlorococcus marinus (strain NATL2A).